Here is a 43-residue protein sequence, read N- to C-terminus: Thymosin beta-12 (43 aa).

Basic and acidic residues-rich tracts occupy residues 1 to 25 and 33 to 43; these read MSDK…ETQE and ETIEQEKQATA. The interval 1–43 is disordered; it reads MSDKPDLAEVSNFDKTKLKKTETQEKNPLPTKETIEQEKQATA. An N-acetylserine modification is found at Ser2.

This sequence belongs to the thymosin beta family.

It is found in the cytoplasm. It localises to the cytoskeleton. Its function is as follows. Plays an important role in the organization of the cytoskeleton. Binds to and sequesters actin monomers (G actin) and therefore inhibits actin polymerization. The sequence is that of Thymosin beta-12 from Oncorhynchus mykiss (Rainbow trout).